Consider the following 116-residue polypeptide: Putative pterin-4-alpha-carbinolamine dehydratase 1 (116 aa).

It belongs to the pterin-4-alpha-carbinolamine dehydratase family.

The enzyme catalyses (4aS,6R)-4a-hydroxy-L-erythro-5,6,7,8-tetrahydrobiopterin = (6R)-L-erythro-6,7-dihydrobiopterin + H2O. In Gloeobacter violaceus (strain ATCC 29082 / PCC 7421), this protein is Putative pterin-4-alpha-carbinolamine dehydratase 1.